The sequence spans 271 residues: Mannosyl-3-phosphoglycerate phosphatase (271 aa).

Catalysis depends on Asp13, which acts as the Nucleophile. The Mg(2+) site is built by Asp13, Asp15, and Asp214.

This sequence belongs to the HAD-like hydrolase superfamily. MPGP family. Mg(2+) serves as cofactor.

Its subcellular location is the cytoplasm. It carries out the reaction 2-O-(alpha-D-mannosyl)-3-phosphoglycerate + H2O = (2R)-2-O-(alpha-D-mannosyl)-glycerate + phosphate. This Escherichia coli (strain SMS-3-5 / SECEC) protein is Mannosyl-3-phosphoglycerate phosphatase.